Reading from the N-terminus, the 230-residue chain is Cytidylate kinase (230 aa).

12 to 20 is an ATP binding site; it reads GPSGAGKGT.

It belongs to the cytidylate kinase family. Type 1 subfamily.

Its subcellular location is the cytoplasm. The catalysed reaction is CMP + ATP = CDP + ADP. It catalyses the reaction dCMP + ATP = dCDP + ADP. This Shewanella piezotolerans (strain WP3 / JCM 13877) protein is Cytidylate kinase.